Reading from the N-terminus, the 220-residue chain is Protein ABA DEFICIENT 4, chloroplastic (220 aa).

A chloroplast-targeting transit peptide spans 1-37 (MGFSSFISQPLSSSLSVMKRNVSAKRSELCLDSSKIR). Helical transmembrane passes span 77–97 (IASS…TLMV), 112–132 (SVPY…SWTP), 154–174 (MFSS…VDLF), and 195–215 (SLCL…KAII).

Expressed in root vasculature, root hairs, leaves, trichomes, sepals, stamens, stigma, pedicels, siliques and embryo.

The protein localises to the plastid. Its subcellular location is the chloroplast membrane. Required for neoxanthin biosynthesis, an intermediary step in abscisic acid (ABA) biosynthesis. Probably not involved directly in the enzymatic conversion of violaxanthin to neoxanthin. Cannot convert violaxanthin to neoxanthin in vitro. Required for ABA biosynthesis in response to drought stress. Required for neoxanthin biosynthesis which is involved in photoprotection of photosystem II (PSII). Neoxanthin acts as an antioxidant within the photosystem PSII supercomplex. The polypeptide is Protein ABA DEFICIENT 4, chloroplastic (Arabidopsis thaliana (Mouse-ear cress)).